We begin with the raw amino-acid sequence, 57 residues long: DNA gyrase inhibitor YacG (57 aa).

Zn(2+) contacts are provided by cysteine 5, cysteine 8, cysteine 20, and cysteine 24.

Belongs to the DNA gyrase inhibitor YacG family. As to quaternary structure, interacts with GyrB. Requires Zn(2+) as cofactor.

In terms of biological role, inhibits all the catalytic activities of DNA gyrase by preventing its interaction with DNA. Acts by binding directly to the C-terminal domain of GyrB, which probably disrupts DNA binding by the gyrase. This Caulobacter vibrioides (strain ATCC 19089 / CIP 103742 / CB 15) (Caulobacter crescentus) protein is DNA gyrase inhibitor YacG.